The sequence spans 228 residues: Phosphatidylserine decarboxylase proenzyme (228 aa).

Residue Ser197 is the Schiff-base intermediate with substrate; via pyruvic acid of the active site. Ser197 carries the pyruvic acid (Ser); by autocatalysis modification.

The protein belongs to the phosphatidylserine decarboxylase family. PSD-A subfamily. Heterodimer of a large membrane-associated beta subunit and a small pyruvoyl-containing alpha subunit. Requires pyruvate as cofactor. Is synthesized initially as an inactive proenzyme. Formation of the active enzyme involves a self-maturation process in which the active site pyruvoyl group is generated from an internal serine residue via an autocatalytic post-translational modification. Two non-identical subunits are generated from the proenzyme in this reaction, and the pyruvate is formed at the N-terminus of the alpha chain, which is derived from the carboxyl end of the proenzyme. The post-translation cleavage follows an unusual pathway, termed non-hydrolytic serinolysis, in which the side chain hydroxyl group of the serine supplies its oxygen atom to form the C-terminus of the beta chain, while the remainder of the serine residue undergoes an oxidative deamination to produce ammonia and the pyruvoyl prosthetic group on the alpha chain.

The protein resides in the cell membrane. The catalysed reaction is a 1,2-diacyl-sn-glycero-3-phospho-L-serine + H(+) = a 1,2-diacyl-sn-glycero-3-phosphoethanolamine + CO2. The protein operates within phospholipid metabolism; phosphatidylethanolamine biosynthesis; phosphatidylethanolamine from CDP-diacylglycerol: step 2/2. Functionally, catalyzes the formation of phosphatidylethanolamine (PtdEtn) from phosphatidylserine (PtdSer). This Phocaeicola vulgatus (strain ATCC 8482 / DSM 1447 / JCM 5826 / CCUG 4940 / NBRC 14291 / NCTC 11154) (Bacteroides vulgatus) protein is Phosphatidylserine decarboxylase proenzyme.